A 202-amino-acid chain; its full sequence is Orotate phosphoribosyltransferase (202 aa).

Residues Arg94, Lys98, His100, and 120 to 128 (EDLISTGGS) each bind 5-phospho-alpha-D-ribose 1-diphosphate. Ser124 provides a ligand contact to orotate.

The protein belongs to the purine/pyrimidine phosphoribosyltransferase family. PyrE subfamily. As to quaternary structure, homodimer. Mg(2+) is required as a cofactor.

The enzyme catalyses orotidine 5'-phosphate + diphosphate = orotate + 5-phospho-alpha-D-ribose 1-diphosphate. It participates in pyrimidine metabolism; UMP biosynthesis via de novo pathway; UMP from orotate: step 1/2. In terms of biological role, catalyzes the transfer of a ribosyl phosphate group from 5-phosphoribose 1-diphosphate to orotate, leading to the formation of orotidine monophosphate (OMP). In Oceanobacillus iheyensis (strain DSM 14371 / CIP 107618 / JCM 11309 / KCTC 3954 / HTE831), this protein is Orotate phosphoribosyltransferase.